The primary structure comprises 199 residues: Putative 3-methyladenine DNA glycosylase (199 aa).

This sequence belongs to the DNA glycosylase MPG family.

This Chlorobium phaeobacteroides (strain BS1) protein is Putative 3-methyladenine DNA glycosylase.